A 278-amino-acid polypeptide reads, in one-letter code: Probable CCR4-associated factor 1 homolog 5 (278 aa).

A divalent metal cation is bound by residues D30, E32, D145, and D217.

This sequence belongs to the CAF1 family. In terms of assembly, component of the CCR4-NOT complex, at least composed of CRR4 and CAF1 proteins. The cofactor is a divalent metal cation.

Its subcellular location is the nucleus. The protein localises to the cytoplasm. The enzyme catalyses Exonucleolytic cleavage of poly(A) to 5'-AMP.. Functionally, ubiquitous transcription factor required for a diverse set of processes. It is a component of the CCR4 complex involved in the control of gene expression. In Arabidopsis thaliana (Mouse-ear cress), this protein is Probable CCR4-associated factor 1 homolog 5 (CAF1-5).